The following is a 323-amino-acid chain: Ferrochelatase (323 aa).

Fe cation-binding residues include H196 and E277.

Belongs to the ferrochelatase family.

It localises to the cytoplasm. It carries out the reaction heme b + 2 H(+) = protoporphyrin IX + Fe(2+). The protein operates within porphyrin-containing compound metabolism; protoheme biosynthesis; protoheme from protoporphyrin-IX: step 1/1. Catalyzes the ferrous insertion into protoporphyrin IX. This is Ferrochelatase from Haemophilus influenzae (strain PittEE).